The sequence spans 296 residues: MPTTALSDQARAKVNLTLRVVGRRVDGYHDLESVVAFADCADRLTLHPGAELSLVTSGPGAQDCGDTADNLVLKATRLLAERVPKLRSGAFVLDKHLPVAAGIGGGSADAAAALRLLARANDLAADDPRVVEAARLTGADVPVCLPSRPCVMTGVGDTLTPLPLPRLPAVMVNPRVPVATKDVFKALGLRAGQLNVGIVDVLKSKGWPAVDASVADWIVAVRRGTNDLEAPALKVEPIVGDVLRALAALPGVRMSRMSGSGATCFALFASDEDTKAGAEVLRAAHPGWWIHAGSLS.

Lys-13 is a catalytic residue. ATP is bound at residue 98-108 (PVAAGIGGGSA). The active site involves Asp-140.

Belongs to the GHMP kinase family. IspE subfamily.

The enzyme catalyses 4-CDP-2-C-methyl-D-erythritol + ATP = 4-CDP-2-C-methyl-D-erythritol 2-phosphate + ADP + H(+). Its pathway is isoprenoid biosynthesis; isopentenyl diphosphate biosynthesis via DXP pathway; isopentenyl diphosphate from 1-deoxy-D-xylulose 5-phosphate: step 3/6. Catalyzes the phosphorylation of the position 2 hydroxy group of 4-diphosphocytidyl-2C-methyl-D-erythritol. This is 4-diphosphocytidyl-2-C-methyl-D-erythritol kinase from Rhodopseudomonas palustris (strain HaA2).